The sequence spans 236 residues: 2-C-methyl-D-erythritol 4-phosphate cytidylyltransferase (236 aa).

It belongs to the IspD/TarI cytidylyltransferase family. IspD subfamily. In terms of assembly, homodimer.

It catalyses the reaction 2-C-methyl-D-erythritol 4-phosphate + CTP + H(+) = 4-CDP-2-C-methyl-D-erythritol + diphosphate. It functions in the pathway isoprenoid biosynthesis; isopentenyl diphosphate biosynthesis via DXP pathway; isopentenyl diphosphate from 1-deoxy-D-xylulose 5-phosphate: step 2/6. Functionally, catalyzes the formation of 4-diphosphocytidyl-2-C-methyl-D-erythritol from CTP and 2-C-methyl-D-erythritol 4-phosphate (MEP). The sequence is that of 2-C-methyl-D-erythritol 4-phosphate cytidylyltransferase from Salmonella paratyphi B (strain ATCC BAA-1250 / SPB7).